The chain runs to 185 residues: Ribosome-recycling factor (185 aa).

Belongs to the RRF family.

It is found in the cytoplasm. Functionally, responsible for the release of ribosomes from messenger RNA at the termination of protein biosynthesis. May increase the efficiency of translation by recycling ribosomes from one round of translation to another. This is Ribosome-recycling factor from Frankia casuarinae (strain DSM 45818 / CECT 9043 / HFP020203 / CcI3).